Here is a 728-residue protein sequence, read N- to C-terminus: Nucleolar GTP-binding protein 2 (728 aa).

M1 carries the N-acetylmethionine modification. The tract at residues 1–33 (MVKPKYKGRSTINRSAASTNPDRVQGAGGQNMR) is disordered. Residues 10–22 (STINRSAASTNPD) show a composition bias toward polar residues. One can recognise a CP-type G domain in the interval 207-368 (WGELYKVIDS…LIDCPGVVYP (162 aa)). GTP is bound by residues 317 to 324 (GYPNVGKS) and 361 to 365 (DCPGV). 3 disordered regions span residues 462 to 521 (PPNA…RNSE), 538 to 595 (VGPQ…DTKA), and 636 to 728 (YKEE…RQKQ). Residues 480–489 (EVPTETTQNN) show a composition bias toward low complexity. A compositionally biased stretch (basic and acidic residues) spans 498 to 520 (EVERSDSITEKEPEGDCSQDRNS). S504 carries the post-translational modification Phosphoserine. A compositionally biased stretch (acidic residues) spans 553–586 (SDLEDLESSGEEEEQEQEQPGEDAEEERSPDTQE). Positions 718-728 (KHRRNKFRQKQ) are enriched in basic residues.

The protein belongs to the TRAFAC class YlqF/YawG GTPase family. NOG2 subfamily. As to quaternary structure, interacts with LYAR and RPL23A. Interacts with the nuclear importin-beta receptor and, at a lower extent, with importin-alpha.

Its subcellular location is the nucleus. It is found in the nucleolus. In terms of biological role, GTPase that associates with pre-60S ribosomal subunits in the nucleolus and is required for their nuclear export and maturation. May promote cell proliferation possibly by increasing p53/TP53 protein levels, and consequently those of its downstream product CDKN1A/p21, and decreasing RPL23A protein levels. The sequence is that of Nucleolar GTP-binding protein 2 (Gnl2) from Mus musculus (Mouse).